The sequence spans 186 residues: ATP synthase subunit delta (186 aa).

It belongs to the ATPase delta chain family. F-type ATPases have 2 components, F(1) - the catalytic core - and F(0) - the membrane proton channel. F(1) has five subunits: alpha(3), beta(3), gamma(1), delta(1), epsilon(1). F(0) has three main subunits: a(1), b(2) and c(10-14). The alpha and beta chains form an alternating ring which encloses part of the gamma chain. F(1) is attached to F(0) by a central stalk formed by the gamma and epsilon chains, while a peripheral stalk is formed by the delta and b chains.

It localises to the cell inner membrane. Its function is as follows. F(1)F(0) ATP synthase produces ATP from ADP in the presence of a proton or sodium gradient. F-type ATPases consist of two structural domains, F(1) containing the extramembraneous catalytic core and F(0) containing the membrane proton channel, linked together by a central stalk and a peripheral stalk. During catalysis, ATP synthesis in the catalytic domain of F(1) is coupled via a rotary mechanism of the central stalk subunits to proton translocation. Functionally, this protein is part of the stalk that links CF(0) to CF(1). It either transmits conformational changes from CF(0) to CF(1) or is implicated in proton conduction. The polypeptide is ATP synthase subunit delta (Ruegeria pomeroyi (strain ATCC 700808 / DSM 15171 / DSS-3) (Silicibacter pomeroyi)).